The chain runs to 63 residues: Large ribosomal subunit protein uL30 (63 aa).

Belongs to the universal ribosomal protein uL30 family. Part of the 50S ribosomal subunit.

In Geobacillus stearothermophilus (Bacillus stearothermophilus), this protein is Large ribosomal subunit protein uL30.